A 422-amino-acid polypeptide reads, in one-letter code: GTPase Obg (422 aa).

The Obg domain maps to 2–157 (AKFIDEIKLT…YLAHIVLKVM (156 aa)). An OBG-type G domain is found at 158–325 (SDVGIIGKPS…LKGKIWKILE (168 aa)). GTP is bound by residues 164 to 171 (GKPSAGKS), 189 to 193 (FTTLV), 210 to 213 (DLPG), 279 to 282 (NKSD), and 306 to 308 (SAI). 2 residues coordinate Mg(2+): Ser171 and Thr191. Residues 334–420 (EEEETEENVE…ILDYEFEWDG (87 aa)) form the OCT domain.

Belongs to the TRAFAC class OBG-HflX-like GTPase superfamily. OBG GTPase family. As to quaternary structure, monomer. Mg(2+) serves as cofactor.

Its subcellular location is the cytoplasm. Its function is as follows. An essential GTPase which binds GTP, GDP and possibly (p)ppGpp with moderate affinity, with high nucleotide exchange rates and a fairly low GTP hydrolysis rate. Plays a role in control of the cell cycle, stress response, ribosome biogenesis and in those bacteria that undergo differentiation, in morphogenesis control. This is GTPase Obg from Mycoplasmopsis agalactiae (strain NCTC 10123 / CIP 59.7 / PG2) (Mycoplasma agalactiae).